Here is a 226-residue protein sequence, read N- to C-terminus: dTTP/UTP pyrophosphatase (226 aa).

The active-site Proton acceptor is the aspartate 85.

The protein belongs to the Maf family. YhdE subfamily. A divalent metal cation serves as cofactor.

The protein localises to the cytoplasm. The enzyme catalyses dTTP + H2O = dTMP + diphosphate + H(+). The catalysed reaction is UTP + H2O = UMP + diphosphate + H(+). Functionally, nucleoside triphosphate pyrophosphatase that hydrolyzes dTTP and UTP. May have a dual role in cell division arrest and in preventing the incorporation of modified nucleotides into cellular nucleic acids. The polypeptide is dTTP/UTP pyrophosphatase (Psychrobacter cryohalolentis (strain ATCC BAA-1226 / DSM 17306 / VKM B-2378 / K5)).